Consider the following 402-residue polypeptide: Type II NADH:quinone oxidoreductase (402 aa).

FAD is bound by residues 12–16 (GAGYA), 39–40 (NK), and valine 83. Glutamate 172 is a catalytic residue. Residues aspartate 302, 319-320 (AQ), and lysine 379 each bind FAD.

This sequence belongs to the NADH dehydrogenase family. The cofactor is FAD.

The protein resides in the cell membrane. It carries out the reaction a quinone + NADH + H(+) = a quinol + NAD(+). Alternative, nonproton pumping NADH:quinone oxidoreductase that delivers electrons to the respiratory chain by oxidation of NADH and reduction of quinones, and contributes to the regeneration of NAD(+). This is Type II NADH:quinone oxidoreductase from Staphylococcus haemolyticus (strain JCSC1435).